A 502-amino-acid chain; its full sequence is UPF0371 protein CLB_0371 (502 aa).

It belongs to the UPF0371 family.

This Clostridium botulinum (strain ATCC 19397 / Type A) protein is UPF0371 protein CLB_0371.